The following is a 398-amino-acid chain: Bifunctional enzyme IspD/IspF (398 aa).

Positions 1-234 (MTNSPRTAAI…SRLMAALGDI (234 aa)) are 2-C-methyl-D-erythritol 4-phosphate cytidylyltransferase. Residues 235-398 (RTGTGYDVHA…LPWGADGLAG (164 aa)) are 2-C-methyl-D-erythritol 2,4-cyclodiphosphate synthase. Positions 241 and 243 each coordinate a divalent metal cation. 4-CDP-2-C-methyl-D-erythritol 2-phosphate-binding positions include 241-243 (DVH) and 267-268 (HS). His-275 lines the a divalent metal cation pocket. Residues 289 to 291 (DIG), 365 to 368 (TTSE), Phe-372, and Arg-375 contribute to the 4-CDP-2-C-methyl-D-erythritol 2-phosphate site.

In the N-terminal section; belongs to the IspD/TarI cytidylyltransferase family. IspD subfamily. The protein in the C-terminal section; belongs to the IspF family. A divalent metal cation serves as cofactor.

The catalysed reaction is 2-C-methyl-D-erythritol 4-phosphate + CTP + H(+) = 4-CDP-2-C-methyl-D-erythritol + diphosphate. The enzyme catalyses 4-CDP-2-C-methyl-D-erythritol 2-phosphate = 2-C-methyl-D-erythritol 2,4-cyclic diphosphate + CMP. It functions in the pathway isoprenoid biosynthesis; isopentenyl diphosphate biosynthesis via DXP pathway; isopentenyl diphosphate from 1-deoxy-D-xylulose 5-phosphate: step 2/6. It participates in isoprenoid biosynthesis; isopentenyl diphosphate biosynthesis via DXP pathway; isopentenyl diphosphate from 1-deoxy-D-xylulose 5-phosphate: step 4/6. Functionally, bifunctional enzyme that catalyzes the formation of 4-diphosphocytidyl-2-C-methyl-D-erythritol from CTP and 2-C-methyl-D-erythritol 4-phosphate (MEP) (IspD), and catalyzes the conversion of 4-diphosphocytidyl-2-C-methyl-D-erythritol 2-phosphate (CDP-ME2P) to 2-C-methyl-D-erythritol 2,4-cyclodiphosphate (ME-CPP) with a corresponding release of cytidine 5-monophosphate (CMP) (IspF). This is Bifunctional enzyme IspD/IspF from Rhodopseudomonas palustris (strain TIE-1).